We begin with the raw amino-acid sequence, 136 residues long: Single-stranded DNA-binding protein 1 (136 aa).

Positions 4 to 109 (LNKMQLIGNL…IMAKEMQMLG (106 aa)) constitute an SSB domain. A disordered region spans residues 109 to 136 (GKKQDNNKVGNARHGDALPADEDDYYDF). Acidic residues predominate over residues 127-136 (PADEDDYYDF).

As to quaternary structure, homotetramer.

This is Single-stranded DNA-binding protein 1 (ssb1) from Xylella fastidiosa (strain 9a5c).